The sequence spans 307 residues: Ribonuclease Z (307 aa).

Zn(2+)-binding residues include His-63, His-65, Asp-67, His-68, His-141, Asp-212, and His-270. The active-site Proton acceptor is the Asp-67.

The protein belongs to the RNase Z family. Homodimer. Zn(2+) is required as a cofactor.

The catalysed reaction is Endonucleolytic cleavage of RNA, removing extra 3' nucleotides from tRNA precursor, generating 3' termini of tRNAs. A 3'-hydroxy group is left at the tRNA terminus and a 5'-phosphoryl group is left at the trailer molecule.. Functionally, zinc phosphodiesterase, which displays some tRNA 3'-processing endonuclease activity. Probably involved in tRNA maturation, by removing a 3'-trailer from precursor tRNA. This chain is Ribonuclease Z, found in Bacillus mycoides (strain KBAB4) (Bacillus weihenstephanensis).